Consider the following 182-residue polypeptide: Large ribosomal subunit protein uL5 (182 aa).

The protein belongs to the universal ribosomal protein uL5 family. In terms of assembly, part of the 50S ribosomal subunit; part of the 5S rRNA/L5/L18/L25 subcomplex. Contacts the 5S rRNA and the P site tRNA. Forms a bridge to the 30S subunit in the 70S ribosome.

Its function is as follows. This is one of the proteins that bind and probably mediate the attachment of the 5S RNA into the large ribosomal subunit, where it forms part of the central protuberance. In the 70S ribosome it contacts protein S13 of the 30S subunit (bridge B1b), connecting the 2 subunits; this bridge is implicated in subunit movement. Contacts the P site tRNA; the 5S rRNA and some of its associated proteins might help stabilize positioning of ribosome-bound tRNAs. The polypeptide is Large ribosomal subunit protein uL5 (Nostoc punctiforme (strain ATCC 29133 / PCC 73102)).